The chain runs to 134 residues: Small ribosomal subunit protein uS8c (134 aa).

The protein belongs to the universal ribosomal protein uS8 family. In terms of assembly, part of the 30S ribosomal subunit.

The protein resides in the plastid. Its subcellular location is the chloroplast. One of the primary rRNA binding proteins, it binds directly to 16S rRNA central domain where it helps coordinate assembly of the platform of the 30S subunit. This is Small ribosomal subunit protein uS8c (rps8) from Coffea arabica (Arabian coffee).